Reading from the N-terminus, the 121-residue chain is Histone H2B, sperm (121 aa).

Positions 1 to 30 (MPPKSGKGQKKAGKAKGAPRSDKKRRRKRK) are disordered. Pro-2 carries the post-translational modification N,N-dimethylproline. Residue Ser-108 is glycosylated (O-linked (GlcNAc) serine). Residue Lys-116 forms a Glycyl lysine isopeptide (Lys-Gly) (interchain with G-Cter in ubiquitin) linkage.

Belongs to the histone H2B family. The nucleosome is a histone octamer containing two molecules each of H2A, H2B, H3 and H4 assembled in one H3-H4 heterotetramer and two H2A-H2B heterodimers. The octamer wraps approximately 147 bp of DNA. Post-translationally, monoubiquitination of Lys-116 gives a specific tag for epigenetic transcriptional activation and is also prerequisite for histone H3 'Lys-4' and 'Lys-79' methylation. In terms of processing, glcNAcylation at Ser-108 promotes monoubiquitination of Lys-116. It fluctuates in response to extracellular glucose, and associates with transcribed genes.

The protein resides in the nucleus. Its subcellular location is the chromosome. Its function is as follows. Core component of nucleosome. Nucleosomes wrap and compact DNA into chromatin, limiting DNA accessibility to the cellular machineries which require DNA as a template. Histones thereby play a central role in transcription regulation, DNA repair, DNA replication and chromosomal stability. DNA accessibility is regulated via a complex set of post-translational modifications of histones, also called histone code, and nucleosome remodeling. The chain is Histone H2B, sperm from Marthasterias glacialis (Spiny starfish).